We begin with the raw amino-acid sequence, 919 residues long: Bifunctional uridylyltransferase/uridylyl-removing enzyme (919 aa).

The interval 1-373 is uridylyltransferase; the sequence is MTDPKVPRQR…LAGFNAKSRM (373 aa). A uridylyl-removing region spans residues 374–727; sequence LKGYTVFGGK…CEFDEERGAT (354 aa). In terms of domain architecture, HD spans 489–611; sequence VDEHTIRAIG…VQSLERLRHL (123 aa). 2 ACT domains span residues 728–811 and 839–919; these read LVTV…LAKR and VIEV…LEPA.

It belongs to the GlnD family. Requires Mg(2+) as cofactor.

The enzyme catalyses [protein-PII]-L-tyrosine + UTP = [protein-PII]-uridylyl-L-tyrosine + diphosphate. The catalysed reaction is [protein-PII]-uridylyl-L-tyrosine + H2O = [protein-PII]-L-tyrosine + UMP + H(+). Uridylyltransferase (UTase) activity is inhibited by glutamine, while glutamine activates uridylyl-removing (UR) activity. Modifies, by uridylylation and deuridylylation, the PII regulatory proteins (GlnB and homologs), in response to the nitrogen status of the cell that GlnD senses through the glutamine level. Under low glutamine levels, catalyzes the conversion of the PII proteins and UTP to PII-UMP and PPi, while under higher glutamine levels, GlnD hydrolyzes PII-UMP to PII and UMP (deuridylylation). Thus, controls uridylylation state and activity of the PII proteins, and plays an important role in the regulation of nitrogen assimilation and metabolism. The chain is Bifunctional uridylyltransferase/uridylyl-removing enzyme from Erythrobacter litoralis (strain HTCC2594).